A 542-amino-acid chain; its full sequence is Chaperonin GroEL (542 aa).

ATP-binding positions include 29 to 32 (TLGP), K50, 86 to 90 (DGTTT), G415, and D495.

It belongs to the chaperonin (HSP60) family. As to quaternary structure, forms a cylinder of 14 subunits composed of two heptameric rings stacked back-to-back. Interacts with the co-chaperonin GroES.

The protein localises to the cytoplasm. It carries out the reaction ATP + H2O + a folded polypeptide = ADP + phosphate + an unfolded polypeptide.. Functionally, together with its co-chaperonin GroES, plays an essential role in assisting protein folding. The GroEL-GroES system forms a nano-cage that allows encapsulation of the non-native substrate proteins and provides a physical environment optimized to promote and accelerate protein folding. The sequence is that of Chaperonin GroEL from Azobacteroides pseudotrichonymphae genomovar. CFP2.